Here is a 102-residue protein sequence, read N- to C-terminus: Cuticle protein AM/CP1114 (102 aa).

The region spanning 16 to 81 (DGNFHYSFET…VESPLLPSIP (66 aa)) is the Chitin-binding type R&amp;R domain. Polar residues predominate over residues 23-33 (FETSNGIQDTK). The segment at 23-50 (FETSNGIQDTKTGVPGSAGQSNMNGDFS) is disordered.

As to expression, arthrodial membrane and calcified shell.

This is Cuticle protein AM/CP1114 from Cancer pagurus (Rock crab).